Consider the following 429-residue polypeptide: 3-phosphoshikimate 1-carboxyvinyltransferase (429 aa).

The 3-phosphoshikimate site is built by Lys-11, Ser-12, and Arg-16. Position 11 (Lys-11) interacts with phosphoenolpyruvate. Phosphoenolpyruvate contacts are provided by Gly-82 and Arg-110. 4 residues coordinate 3-phosphoshikimate: Ser-155, Gln-157, Asp-302, and Lys-329. Phosphoenolpyruvate is bound at residue Gln-157. The active-site Proton acceptor is Asp-302. Phosphoenolpyruvate-binding residues include Arg-333 and Arg-385.

Belongs to the EPSP synthase family. As to quaternary structure, monomer.

The protein resides in the cytoplasm. The catalysed reaction is 3-phosphoshikimate + phosphoenolpyruvate = 5-O-(1-carboxyvinyl)-3-phosphoshikimate + phosphate. Its pathway is metabolic intermediate biosynthesis; chorismate biosynthesis; chorismate from D-erythrose 4-phosphate and phosphoenolpyruvate: step 6/7. Functionally, catalyzes the transfer of the enolpyruvyl moiety of phosphoenolpyruvate (PEP) to the 5-hydroxyl of shikimate-3-phosphate (S3P) to produce enolpyruvyl shikimate-3-phosphate and inorganic phosphate. In Helicobacter acinonychis (strain Sheeba), this protein is 3-phosphoshikimate 1-carboxyvinyltransferase.